The primary structure comprises 494 residues: BTB/POZ domain and ankyrin repeat-containing protein NH5.1 (494 aa).

One can recognise a BTB domain in the interval 25–130; the sequence is SDVAFSVEGR…LYSGQASVAA (106 aa). Positions 60 to 94 are disordered; it reads NHQPPPPPPPLNWPMAGGGGGGSGGGGRGGAGGGG. Over residues 61–71 the composition is skewed to pro residues; the sequence is HQPPPPPPPLN. Residues 75 to 94 show a composition bias toward gly residues; sequence AGGGGGGSGGGGRGGAGGGG. The C2HC NPR-type zinc-finger motif lies at 136–150; that stretch reads LPGCGARGCWHTRCG. 4 residues coordinate Zn(2+): C139, C144, H146, and C149. ANK repeat units lie at residues 274-302, 303-333, 338-367, and 371-405; these read NKIR…GLDL, DDAL…DVNS, TGKT…DPNS, and DGVT…KLRL. Disordered stretches follow at residues 421–443 and 469–494; these read DGAP…PRSD and AAGE…NGFA.

Belongs to the plant 'ANKYRIN-BTB/POZ' family. 'NOOT-BOP-COCH-like' (NBCL) subfamily. In terms of assembly, homodimer. Interacts with TGAL5, TGAL7, TGAL8 and TGAL9.

It localises to the nucleus. It is found in the cytoplasm. It functions in the pathway protein modification; protein ubiquitination. May act as a substrate-specific adapter of an E3 ubiquitin-protein ligase complex (CUL3-RBX1-BTB) which mediates the ubiquitination and subsequent proteasomal degradation of target proteins. Transcriptional co-regulator involved in the promotion of leaf and floral meristem fate and determinacy. Required for the abscission of senescent organs, probably by regulating the cell wall disorganization in abscission zones (AZs, e.g. pulvini at the base of leaves). This chain is BTB/POZ domain and ankyrin repeat-containing protein NH5.1, found in Oryza sativa subsp. japonica (Rice).